Reading from the N-terminus, the 198-residue chain is Pyridoxal 5'-phosphate synthase subunit PdxT (198 aa).

Position 50–52 (50–52 (GES)) interacts with L-glutamine. The active-site Nucleophile is Cys82. L-glutamine is bound by residues Arg111 and 140-141 (IR). Residues His177 and Glu179 each act as charge relay system in the active site.

Belongs to the glutaminase PdxT/SNO family. In the presence of PdxS, forms a dodecamer of heterodimers. Only shows activity in the heterodimer.

It carries out the reaction aldehydo-D-ribose 5-phosphate + D-glyceraldehyde 3-phosphate + L-glutamine = pyridoxal 5'-phosphate + L-glutamate + phosphate + 3 H2O + H(+). The catalysed reaction is L-glutamine + H2O = L-glutamate + NH4(+). It functions in the pathway cofactor biosynthesis; pyridoxal 5'-phosphate biosynthesis. Its function is as follows. Catalyzes the hydrolysis of glutamine to glutamate and ammonia as part of the biosynthesis of pyridoxal 5'-phosphate. The resulting ammonia molecule is channeled to the active site of PdxS. This chain is Pyridoxal 5'-phosphate synthase subunit PdxT, found in Leifsonia xyli subsp. xyli (strain CTCB07).